A 362-amino-acid polypeptide reads, in one-letter code: Anthranilate phosphoribosyltransferase 2 (362 aa).

Residues Gly-103, 106 to 107 (GD), Thr-111, 113 to 116 (NIST), 131 to 139 (KHGNRSASS), and Ser-143 contribute to the 5-phospho-alpha-D-ribose 1-diphosphate site. Position 103 (Gly-103) interacts with anthranilate. Mg(2+) is bound at residue Ser-115. Asn-134 serves as a coordination point for anthranilate. Arg-189 provides a ligand contact to anthranilate. 2 residues coordinate Mg(2+): Asp-248 and Glu-249.

The protein belongs to the anthranilate phosphoribosyltransferase family. In terms of assembly, homodimer. Mg(2+) is required as a cofactor.

The enzyme catalyses N-(5-phospho-beta-D-ribosyl)anthranilate + diphosphate = 5-phospho-alpha-D-ribose 1-diphosphate + anthranilate. Its pathway is amino-acid biosynthesis; L-tryptophan biosynthesis; L-tryptophan from chorismate: step 2/5. Its function is as follows. Catalyzes the transfer of the phosphoribosyl group of 5-phosphorylribose-1-pyrophosphate (PRPP) to anthranilate to yield N-(5'-phosphoribosyl)-anthranilate (PRA). This is Anthranilate phosphoribosyltransferase 2 from Nostoc sp. (strain PCC 7120 / SAG 25.82 / UTEX 2576).